A 166-amino-acid polypeptide reads, in one-letter code: NADH-ubiquinone oxidoreductase chain 6 (166 aa).

6 consecutive transmembrane segments (helical) span residues 4-24 (FFSL…VVSA), 27-47 (QGVV…VFLG), 50-70 (FAAL…FGYC), 82-102 (VGGT…LLCL), 109-129 (LLVY…VGVF), and 135-155 (WGLI…LVIL).

Belongs to the complex I subunit 6 family.

Its subcellular location is the mitochondrion membrane. It catalyses the reaction a ubiquinone + NADH + 5 H(+)(in) = a ubiquinol + NAD(+) + 4 H(+)(out). Its function is as follows. Core subunit of the mitochondrial membrane respiratory chain NADH dehydrogenase (Complex I) that is believed to belong to the minimal assembly required for catalysis. Complex I functions in the transfer of electrons from NADH to the respiratory chain. The immediate electron acceptor for the enzyme is believed to be ubiquinone. The polypeptide is NADH-ubiquinone oxidoreductase chain 6 (MT-ND6) (Lycodon semicarinatus (Ryukyu odd-tooth snake)).